A 103-amino-acid polypeptide reads, in one-letter code: Phosphoribosyl-ATP pyrophosphatase (103 aa).

Positions 84–103 are disordered; the sequence is LQSREGKLSKTSDRKEINDL.

Belongs to the PRA-PH family.

The protein resides in the cytoplasm. It carries out the reaction 1-(5-phospho-beta-D-ribosyl)-ATP + H2O = 1-(5-phospho-beta-D-ribosyl)-5'-AMP + diphosphate + H(+). The protein operates within amino-acid biosynthesis; L-histidine biosynthesis; L-histidine from 5-phospho-alpha-D-ribose 1-diphosphate: step 2/9. This Listeria innocua serovar 6a (strain ATCC BAA-680 / CLIP 11262) protein is Phosphoribosyl-ATP pyrophosphatase (hisE).